The following is a 38-amino-acid chain: Large ribosomal subunit protein bL36A (38 aa).

This sequence belongs to the bacterial ribosomal protein bL36 family.

The sequence is that of Large ribosomal subunit protein bL36A from Pseudomonas aeruginosa (strain UCBPP-PA14).